The sequence spans 302 residues: Putative thiol protease R355 (302 aa).

Residues H182 and D199 contribute to the active site. The active-site Nucleophile is C244.

The protein belongs to the peptidase C48 family.

The protein resides in the virion. This is Putative thiol protease R355 from Acanthamoeba polyphaga mimivirus (APMV).